Consider the following 339-residue polypeptide: DNA-directed RNA polymerase subunit alpha (339 aa).

The segment at 1–233 (MVREEVAGST…DLFLPFLHAE (233 aa)) is alpha N-terminal domain (alpha-NTD). An alpha C-terminal domain (alpha-CTD) region spans residues 264–339 (KKGIPLNCIF…IDLLKNKLSF (76 aa)).

It belongs to the RNA polymerase alpha chain family. In terms of assembly, in plastids the minimal PEP RNA polymerase catalytic core is composed of four subunits: alpha, beta, beta', and beta''. When a (nuclear-encoded) sigma factor is associated with the core the holoenzyme is formed, which can initiate transcription.

It is found in the plastid. Its subcellular location is the chloroplast. The catalysed reaction is RNA(n) + a ribonucleoside 5'-triphosphate = RNA(n+1) + diphosphate. In terms of biological role, DNA-dependent RNA polymerase catalyzes the transcription of DNA into RNA using the four ribonucleoside triphosphates as substrates. The polypeptide is DNA-directed RNA polymerase subunit alpha (Psathyrostachys fragilis (Russian wild rye)).